We begin with the raw amino-acid sequence, 296 residues long: Tyrosine recombinase XerC (296 aa).

Residues 2–85 enclose the Core-binding (CB) domain; it reads ADQASWLERF…ALKQFGQFLL (84 aa). Residues 106–285 enclose the Tyr recombinase domain; it reads TLPKNLDPDS…DFQHLAKVYD (180 aa). Catalysis depends on residues Arg145, Lys169, His237, Arg240, and His263. Tyr272 (O-(3'-phospho-DNA)-tyrosine intermediate) is an active-site residue.

It belongs to the 'phage' integrase family. XerC subfamily. As to quaternary structure, forms a cyclic heterotetrameric complex composed of two molecules of XerC and two molecules of XerD.

Its subcellular location is the cytoplasm. Its function is as follows. Site-specific tyrosine recombinase, which acts by catalyzing the cutting and rejoining of the recombining DNA molecules. The XerC-XerD complex is essential to convert dimers of the bacterial chromosome into monomers to permit their segregation at cell division. It also contributes to the segregational stability of plasmids. This is Tyrosine recombinase XerC from Shewanella amazonensis (strain ATCC BAA-1098 / SB2B).